A 335-amino-acid polypeptide reads, in one-letter code: Dihydroorotate dehydrogenase (quinone) (335 aa).

FMN is bound by residues 58–62 and threonine 82; that span reads AGADK. Lysine 62 lines the substrate pocket. 107–111 serves as a coordination point for substrate; it reads NRNGF. Asparagine 135 and asparagine 168 together coordinate FMN. Asparagine 168 is a substrate binding site. Serine 171 (nucleophile) is an active-site residue. Residue asparagine 173 participates in substrate binding. Lysine 213 and glycine 241 together coordinate FMN. 242 to 243 provides a ligand contact to substrate; that stretch reads NT. FMN is bound by residues glycine 264, glycine 293, and 314-315; that span reads YS.

Belongs to the dihydroorotate dehydrogenase family. Type 2 subfamily. In terms of assembly, monomer. Requires FMN as cofactor.

The protein localises to the cell membrane. It catalyses the reaction (S)-dihydroorotate + a quinone = orotate + a quinol. Its pathway is pyrimidine metabolism; UMP biosynthesis via de novo pathway; orotate from (S)-dihydroorotate (quinone route): step 1/1. Catalyzes the conversion of dihydroorotate to orotate with quinone as electron acceptor. This Actinobacillus pleuropneumoniae serotype 3 (strain JL03) protein is Dihydroorotate dehydrogenase (quinone).